The chain runs to 453 residues: Bifunctional protein GlmU (453 aa).

Residues Met1–Arg226 are pyrophosphorylase. UDP-N-acetyl-alpha-D-glucosamine-binding positions include Leu8–Gly11, Lys22, Gln73, Gly78–Thr79, Tyr100–Asp102, Gly137, Glu151, Asn166, and Asn224. Asp102 serves as a coordination point for Mg(2+). Asn224 provides a ligand contact to Mg(2+). The segment at Ala227–Gln247 is linker. Residues Gly248–Lys453 are N-acetyltransferase. UDP-N-acetyl-alpha-D-glucosamine is bound by residues Arg330 and Lys348. His360 serves as the catalytic Proton acceptor. UDP-N-acetyl-alpha-D-glucosamine contacts are provided by Tyr363 and Asn374. Residues Ala377, Asn383–Tyr384, Ser402, Ala420, and Arg437 each bind acetyl-CoA.

This sequence in the N-terminal section; belongs to the N-acetylglucosamine-1-phosphate uridyltransferase family. The protein in the C-terminal section; belongs to the transferase hexapeptide repeat family. As to quaternary structure, homotrimer. Mg(2+) is required as a cofactor.

Its subcellular location is the cytoplasm. The catalysed reaction is alpha-D-glucosamine 1-phosphate + acetyl-CoA = N-acetyl-alpha-D-glucosamine 1-phosphate + CoA + H(+). It catalyses the reaction N-acetyl-alpha-D-glucosamine 1-phosphate + UTP + H(+) = UDP-N-acetyl-alpha-D-glucosamine + diphosphate. Its pathway is nucleotide-sugar biosynthesis; UDP-N-acetyl-alpha-D-glucosamine biosynthesis; N-acetyl-alpha-D-glucosamine 1-phosphate from alpha-D-glucosamine 6-phosphate (route II): step 2/2. It functions in the pathway nucleotide-sugar biosynthesis; UDP-N-acetyl-alpha-D-glucosamine biosynthesis; UDP-N-acetyl-alpha-D-glucosamine from N-acetyl-alpha-D-glucosamine 1-phosphate: step 1/1. It participates in bacterial outer membrane biogenesis; LPS lipid A biosynthesis. Its function is as follows. Catalyzes the last two sequential reactions in the de novo biosynthetic pathway for UDP-N-acetylglucosamine (UDP-GlcNAc). The C-terminal domain catalyzes the transfer of acetyl group from acetyl coenzyme A to glucosamine-1-phosphate (GlcN-1-P) to produce N-acetylglucosamine-1-phosphate (GlcNAc-1-P), which is converted into UDP-GlcNAc by the transfer of uridine 5-monophosphate (from uridine 5-triphosphate), a reaction catalyzed by the N-terminal domain. The protein is Bifunctional protein GlmU of Vibrio parahaemolyticus serotype O3:K6 (strain RIMD 2210633).